The primary structure comprises 150 residues: Ribonuclease K6 (150 aa).

Positions 1 to 23 (MVLCFPLLLLLLVLWGQVCPLHA) are cleaved as a signal peptide. His-38 (proton acceptor) is an active-site residue. Intrachain disulfides connect Cys-46–Cys-104, Cys-60–Cys-114, Cys-78–Cys-129, and Cys-85–Cys-92. A glycan (N-linked (GlcNAc...) asparagine) is linked at Asn-55. Substrate contacts are provided by residues 61-65 (KPQNT) and Lys-86. The N-linked (GlcNAc...) asparagine glycan is linked to Asn-100. Position 105 (Arg-105) interacts with substrate. His-145 (proton donor) is an active-site residue.

Belongs to the pancreatic ribonuclease family. As to quaternary structure, interacts (via N-terminus) with bacterial lipopolysaccharide (LPS).

The protein localises to the secreted. Its subcellular location is the lysosome. It localises to the cytoplasmic granule. Functionally, ribonuclease which shows a preference for the pyrimidines uridine and cytosine. Has potent antibacterial activity against a range of Gram-positive and Gram-negative bacteria, including P.aeruginosa, A.baumanii, M.luteus, S.aureus, E.faecalis, E.faecium, S.saprophyticus and E.coli. Causes loss of bacterial membrane integrity, and also promotes agglutination of Gram-negative bacteria. Probably contributes to urinary tract sterility. Bactericidal activity is independent of RNase activity. The polypeptide is Ribonuclease K6 (RNASE6) (Saimiri sciureus (Common squirrel monkey)).